A 612-amino-acid chain; its full sequence is Threonine--tRNA ligase (612 aa).

The interval 218 to 509 (DHRKLGVELG…LSEHFGGNFP (292 aa)) is catalytic. Residues Cys310, His361, and His486 each contribute to the Zn(2+) site.

The protein belongs to the class-II aminoacyl-tRNA synthetase family. Homodimer. It depends on Zn(2+) as a cofactor.

It localises to the cytoplasm. It carries out the reaction tRNA(Thr) + L-threonine + ATP = L-threonyl-tRNA(Thr) + AMP + diphosphate + H(+). In terms of biological role, catalyzes the attachment of threonine to tRNA(Thr) in a two-step reaction: L-threonine is first activated by ATP to form Thr-AMP and then transferred to the acceptor end of tRNA(Thr). Also edits incorrectly charged L-seryl-tRNA(Thr). This Helicobacter pylori (strain J99 / ATCC 700824) (Campylobacter pylori J99) protein is Threonine--tRNA ligase.